We begin with the raw amino-acid sequence, 365 residues long: Pre-small/secreted glycoprotein (365 aa).

The signal sequence occupies residues 1–32 (MGASGILQLPRERFRKTSFFVWVIILFHKVFS). Residue Asn-40 is glycosylated (N-linked (GlcNAc...) asparagine; by host). Cystine bridges form between Cys-108–Cys-135 and Cys-121–Cys-147. 4 N-linked (GlcNAc...) asparagine; by host glycosylation sites follow: Asn-204, Asn-228, Asn-257, and Asn-268.

This sequence belongs to the filoviruses glycoprotein family. Homodimer; disulfide-linked. The homodimers are linked by two disulfide bonds in a parallel orientation. As to quaternary structure, monomer. In terms of processing, this precursor is processed into mature sGP and delta-peptide by host furin or furin-like proteases. The cleavage site corresponds to the furin optimal cleavage sequence [KR]-X-[KR]-R. Post-translationally, N-glycosylated. O-glycosylated.

The protein localises to the secreted. Functionally, seems to possess an anti-inflammatory activity as it can reverse the barrier-decreasing effects of TNF alpha. Might therefore contribute to the lack of inflammatory reaction seen during infection in spite the of extensive necrosis and massive virus production. Does not seem to be involved in activation of primary macrophages. Does not seem to interact specifically with neutrophils. In terms of biological role, viroporin that permeabilizes mammalian cell plasma membranes. It acts by altering permeation of ionic compounds and small molecules. This activity may lead to viral enterotoxic activity. The chain is Pre-small/secreted glycoprotein (GP) from Epomops franqueti (Franquet's epauletted fruit bat).